The following is a 63-amino-acid chain: ATP synthase subunit epsilon, mitochondrial (63 aa).

As to quaternary structure, F-type ATP synthases have 2 components, the catalytic core F(1) and the membrane-embedded component F(0), linked together by a central stalk and a peripheral stalk. The central stalk, also called rotor shaft, is often seen as part of F(1). The peripheral stalk is seen as part of F(0). F(0) contains the membrane channel next to the rotor. F-type ATP synthases form dimers but each monomer functions independently in ATP generation. The dimer consists of 18 different polypeptides: ATP1 (subunit alpha, part of F(1), 3 molecules per monomer), ATP2 (subunit beta, part of F(1), 3 molecules per monomer), ATP3 (subunit gamma, part of the central stalk), ATP4 (subunit b, part of the peripheral stalk), ATP5/OSCP (subunit 5/OSCP, part of the peripheral stalk), ATP6 (subunit a, part of the peripheral stalk), ATP7 (subunit d, part of the peripheral stalk), ATP8 (subunit 8, part of the peripheral stalk), OLI1 (subunit c, part of the rotor, 10 molecules per monomer), ATP14 (subunit h, part of the peripheral stalk), ATP15 (subunit epsilon, part of the central stalk), ATP16 (subunit delta, part of the central stalk), ATP17 (subunit f, part of the peripheral stalk), ATP18 (subunit i/j, part of the peripheral stalk). Dimer-specific subunits are ATP19 (subunit k, at interface between monomers), ATP20 (subunit g, at interface between monomers), TIM11 (subunit e, at interface between monomers). Also contains subunit L.

The protein resides in the mitochondrion inner membrane. Its function is as follows. Mitochondrial membrane ATP synthase (F(1)F(0) ATP synthase or Complex V) produces ATP from ADP in the presence of a proton gradient across the membrane which is generated by electron transport complexes of the respiratory chain. F-type ATP synthases consist of two structural domains, F(1) - containing the extramembraneous catalytic core, and F(0) - containing the membrane proton channel, linked together by a central stalk and a peripheral stalk. During catalysis, ATP synthesis in the catalytic domain of F(1) is coupled via a rotary mechanism of the central stalk subunits to proton translocation. Part of the complex F(1) domain and the central stalk which is part of the complex rotary element. Rotation of the central stalk against the surrounding alpha/ATP1(3)beta/ATP2(3) subunits leads to hydrolysis of ATP in three separate catalytic sites on the beta/ATP2 subunits. The chain is ATP synthase subunit epsilon, mitochondrial from Pichia angusta (Yeast).